A 255-amino-acid chain; its full sequence is Thiazole synthase (255 aa).

The Schiff-base intermediate with DXP role is filled by lysine 96. 1-deoxy-D-xylulose 5-phosphate is bound by residues glycine 157, 183-184 (AG), and 205-206 (NT).

It belongs to the ThiG family. Homotetramer. Forms heterodimers with either ThiH or ThiS.

The protein localises to the cytoplasm. It carries out the reaction [ThiS sulfur-carrier protein]-C-terminal-Gly-aminoethanethioate + 2-iminoacetate + 1-deoxy-D-xylulose 5-phosphate = [ThiS sulfur-carrier protein]-C-terminal Gly-Gly + 2-[(2R,5Z)-2-carboxy-4-methylthiazol-5(2H)-ylidene]ethyl phosphate + 2 H2O + H(+). The protein operates within cofactor biosynthesis; thiamine diphosphate biosynthesis. Its function is as follows. Catalyzes the rearrangement of 1-deoxy-D-xylulose 5-phosphate (DXP) to produce the thiazole phosphate moiety of thiamine. Sulfur is provided by the thiocarboxylate moiety of the carrier protein ThiS. In vitro, sulfur can be provided by H(2)S. This Geobacillus thermodenitrificans (strain NG80-2) protein is Thiazole synthase.